The following is a 734-amino-acid chain: Myb-like protein J (734 aa).

3 disordered regions span residues 1–35 (MPNNQQNQIESPSKNTSNVGGSTLLNNNSPPFKSN), 128–196 (QKDQ…PTMM), and 221–378 (SPIS…LKQG). Residues 131 to 142 (QQQKEQQKEQQK) are compositionally biased toward basic and acidic residues. Low complexity predominate over residues 164 to 173 (TTTTTTTTTT). A compositionally biased stretch (polar residues) spans 174 to 196 (AVEQQGAEQQDTNLNSTSSPTMM). A compositionally biased stretch (low complexity) spans 221 to 230 (SPISSSLNNS). Residues 231–257 (QDNTKPVSPDNIENTSNPMDTSSSNGK) are compositionally biased toward polar residues. A compositionally biased stretch (low complexity) spans 258–372 (TPTITPIVTP…GGKTNPTGKK (115 aa)). The HTH myb-type domain occupies 371–426 (KKTSLKQGWTKEEHIRFLNGIQIHGKGAWKEIAQFVGTRTPTQIQSHAQKYYLRQK). Positions 399–422 (WKEIAQFVGTRTPTQIQSHAQKYY) form a DNA-binding region, H-T-H motif. Residues 445-454 (DDNLNNSNKN) show a composition bias toward low complexity. Residues 445–623 (DDNLNNSNKN…GNILRHQNSH (179 aa)) form a disordered region. Residues 455 to 468 (NVDKNKQDDKEKKT) are compositionally biased toward basic and acidic residues. The segment covering 469 to 478 (QKTKKTKSKS) has biased composition (basic residues). Low complexity-rich tracts occupy residues 489–543 (QQQQ…SSQT) and 574–615 (NNNN…NEGN).

Its subcellular location is the nucleus. The polypeptide is Myb-like protein J (mybJ) (Dictyostelium discoideum (Social amoeba)).